A 138-amino-acid polypeptide reads, in one-letter code: Translation initiation factor 5A (138 aa).

Hypusine is present on Lys-42.

The protein belongs to the eIF-5A family.

The protein resides in the cytoplasm. Functions by promoting the formation of the first peptide bond. The sequence is that of Translation initiation factor 5A (eif5a) from Pyrobaculum aerophilum (strain ATCC 51768 / DSM 7523 / JCM 9630 / CIP 104966 / NBRC 100827 / IM2).